We begin with the raw amino-acid sequence, 483 residues long: CdaA regulatory protein CdaR (483 aa).

A helical transmembrane segment spans residues 9–26 (WAVKIIALLFALLLYVAV). YbbR-like domains are found at residues 55 to 135 (IPVK…TVTI), 143 to 228 (FPVE…KITV), 237 to 316 (VPFK…TLHI), and 329 to 394 (VPIK…VNGP). Positions 410–483 (LTSKKSNTST…STANSQSSSE (74 aa)) are disordered. Low complexity predominate over residues 413-430 (KKSNTSTNDNSSNTSGNQ). Basic and acidic residues predominate over residues 431–454 (DTDKQTNDQKNNQQEDTKNTDKNN).

Interacts with CdaA.

It is found in the cell membrane. In terms of biological role, upon coexpression in E.coli stimulates the diadenylate cyclase activity of CdaA about 20-fold. In B.subtilis c-di-AMP is a second messenger that mediates growth, DNA repair and cell wall homeostasis; it is toxic when present in excess. The polypeptide is CdaA regulatory protein CdaR (Bacillus subtilis (strain 168)).